Reading from the N-terminus, the 135-residue chain is ATP synthase epsilon chain (135 aa).

The protein belongs to the ATPase epsilon chain family. As to quaternary structure, F-type ATPases have 2 components, CF(1) - the catalytic core - and CF(0) - the membrane proton channel. CF(1) has five subunits: alpha(3), beta(3), gamma(1), delta(1), epsilon(1). CF(0) has three main subunits: a, b and c.

It localises to the cellular thylakoid membrane. Functionally, produces ATP from ADP in the presence of a proton gradient across the membrane. In Prochlorococcus marinus (strain NATL1A), this protein is ATP synthase epsilon chain.